Reading from the N-terminus, the 150-residue chain is uncharacterized protein (150 aa).

The Flavodoxin-like domain occupies 4-148; it reads LILYKSIHHK…KAKEFAKSIL (145 aa).

This is an uncharacterized protein from Methanocaldococcus jannaschii (strain ATCC 43067 / DSM 2661 / JAL-1 / JCM 10045 / NBRC 100440) (Methanococcus jannaschii).